We begin with the raw amino-acid sequence, 256 residues long: 5'-nucleotidase SurE (256 aa).

Positions 8, 9, 40, and 92 each coordinate a divalent metal cation.

This sequence belongs to the SurE nucleotidase family. The cofactor is a divalent metal cation.

The protein resides in the cytoplasm. The enzyme catalyses a ribonucleoside 5'-phosphate + H2O = a ribonucleoside + phosphate. Nucleotidase that shows phosphatase activity on nucleoside 5'-monophosphates. The sequence is that of 5'-nucleotidase SurE from Sinorhizobium medicae (strain WSM419) (Ensifer medicae).